Consider the following 170-residue polypeptide: Peptide deformylase 2 (170 aa).

Positions 94 and 136 each coordinate Fe cation. E137 is a catalytic residue. H140 lines the Fe cation pocket.

Belongs to the polypeptide deformylase family. It depends on Fe(2+) as a cofactor.

It catalyses the reaction N-terminal N-formyl-L-methionyl-[peptide] + H2O = N-terminal L-methionyl-[peptide] + formate. Removes the formyl group from the N-terminal Met of newly synthesized proteins. Requires at least a dipeptide for an efficient rate of reaction. N-terminal L-methionine is a prerequisite for activity but the enzyme has broad specificity at other positions. The polypeptide is Peptide deformylase 2 (Xanthomonas axonopodis pv. citri (strain 306)).